The sequence spans 530 residues: ATP-dependent 6-phosphofructokinase 4, chloroplastic (530 aa).

A chloroplast-targeting transit peptide spans 1–54; sequence MEASISFLGSTKPNISLFNPSSNVLPRRDFPLPALKLKKVSVLPRILHQKRLIR. Position 121 is a phosphoserine (Ser-121). ATP is bound by residues Gly-152, 215–216, and 240–243; these read RG and GGGT. Substrate is bound by residues 269 to 271, 314 to 316, Glu-370, and 427 to 430; these read TID, MGR, and YMIR. Asp-271 acts as the Proton acceptor in catalysis.

The protein belongs to the phosphofructokinase type A (PFKA) family. PPi-dependent PFK group II subfamily. Atypical ATP-dependent clade 'X' sub-subfamily. Homotetramer. Requires Mg(2+) as cofactor. Expressed in leaves, stems and flowers.

Its subcellular location is the plastid. It is found in the chloroplast. It carries out the reaction beta-D-fructose 6-phosphate + ATP = beta-D-fructose 1,6-bisphosphate + ADP + H(+). Its pathway is carbohydrate degradation; glycolysis; D-glyceraldehyde 3-phosphate and glycerone phosphate from D-glucose: step 3/4. With respect to regulation, allosterically activated by AMP. Its function is as follows. Catalyzes the phosphorylation of D-fructose 6-phosphate to fructose 1,6-bisphosphate by ATP, the first committing step of glycolysis. The polypeptide is ATP-dependent 6-phosphofructokinase 4, chloroplastic (Arabidopsis thaliana (Mouse-ear cress)).